The primary structure comprises 202 residues: uncharacterized protein (202 aa).

The segment at 178-202 is disordered; sequence VCSSEDSEADRYSDYGWGGPSSPFN.

This is an uncharacterized protein from Homo sapiens (Human).